We begin with the raw amino-acid sequence, 23 residues long: Acidic phospholipase A2 Ts-A2 (23 aa).

Ca(2+) is required as a cofactor. Contains 7 disulfide bonds. As to expression, expressed by the venom gland.

Its subcellular location is the secreted. It catalyses the reaction a 1,2-diacyl-sn-glycero-3-phosphocholine + H2O = a 1-acyl-sn-glycero-3-phosphocholine + a fatty acid + H(+). Functionally, exhibits moderate hydrolytic activities and prefers the anionic micelles (dPPC with deoxycholate) to the zwitterionic micelles (dPPC with Triton X-100). PLA2 catalyzes the calcium-dependent hydrolysis of the 2-acyl groups in 3-sn-phosphoglycerides. The protein is Acidic phospholipase A2 Ts-A2 of Trimeresurus stejnegeri (Chinese green tree viper).